A 305-amino-acid polypeptide reads, in one-letter code: Protoheme IX farnesyltransferase (305 aa).

9 helical membrane-spanning segments follow: residues 31 to 51, 52 to 72, 96 to 118, 123 to 145, 151 to 171, 179 to 199, 225 to 245, 247 to 267, and 281 to 301; these read VMSL…YSVH, PFIA…AGAI, VIES…FFMA, LLAS…IWLK, NIVI…AAVS, IILF…LALF, ILIY…IGMN, FIYL…AGSL, and FAYS…TNTI.

This sequence belongs to the UbiA prenyltransferase family. Protoheme IX farnesyltransferase subfamily.

The protein localises to the cell inner membrane. The enzyme catalyses heme b + (2E,6E)-farnesyl diphosphate + H2O = Fe(II)-heme o + diphosphate. Its pathway is porphyrin-containing compound metabolism; heme O biosynthesis; heme O from protoheme: step 1/1. In terms of biological role, converts heme B (protoheme IX) to heme O by substitution of the vinyl group on carbon 2 of heme B porphyrin ring with a hydroxyethyl farnesyl side group. The polypeptide is Protoheme IX farnesyltransferase (Rickettsia rickettsii (strain Iowa)).